The chain runs to 76 residues: Alpha/kappa-conotoxin pl14a (76 aa).

An N-terminal signal peptide occupies residues 1–24 (MPSVRSVTCCCLLWMMFSVQLVTP). Residues 25–39 (GSPGTAQLSGHRTAR) constitute a propeptide that is removed on maturation. 2 cysteine pairs are disulfide-bonded: Cys-46/Cys-61 and Cys-50/Cys-63. An Arginine amide modification is found at Arg-64. A propeptide spanning residues 65-76 (GKRDAVSSSMAV) is cleaved from the precursor.

This sequence belongs to the conotoxin J superfamily. Expressed by the venom duct.

It is found in the secreted. Its function is as follows. Highly inhibits both nicotinic acetylcholine receptors (neuronal (IC(50)=8.7 uM for alpha-3/beta-4) and muscular (IC(50)=0.54 uM for alpha-1-beta-1-epsilon-delta (CHRNA1-CHRNB1-CHRND-CHRNE)) subtypes) and the voltage-gated potassium channel Kv1.6/KCNA6 subtype (IC(50)=1.59 uM). The sequence is that of Alpha/kappa-conotoxin pl14a from Conus planorbis (Planorbis cone).